We begin with the raw amino-acid sequence, 432 residues long: MSELKDCPLQFHDFKSVDHLKVCPRYTAVLARSEDDGIGIEELDTLQLELETLLSSASRRLRVLEAETQILTDWQDKKGDRRFLKLGRDHELGAPPKHGKPKKQKLEGKTGHGPGPGPGRPKSKNVQPKIQEYEFTDDPIDVPRIPKNDAPNRFWASVEPYCADITSEEVRTLEELLKPPEDEAEHYKIPPLGKHYSQRWAQEDLLEEQKDGARAAAVADKKKGLIGPLTELDTKDVDALLKKSEAQHEQPEDGCPFGALTQRLLQALVEENIISPMEDSPIPDMSGKESGADGASTSPRNQNKPFSVPHTKSLESRIKEELIAQGLLESEDRPAEDSEDEVLAELRKRQAELKALSAHNRTKKHDLLRLAKEEVSRQELRQRVRMADNEVMDAFRKIMAARQKKRTPTKKEKDQAWKTLKERESILKLLDG.

K21 is covalently cross-linked (Glycyl lysine isopeptide (Lys-Gly) (interchain with G-Cter in SUMO2)). Residues 40–69 (IEELDTLQLELETLLSSASRRLRVLEAETQ) adopt a coiled-coil conformation. The disordered stretch occupies residues 87 to 127 (GRDHELGAPPKHGKPKKQKLEGKTGHGPGPGPGRPKSKNVQ). K129 participates in a covalent cross-link: Glycyl lysine isopeptide (Lys-Gly) (interchain with G-Cter in SUMO2). Residues 272-319 (NIISPMEDSPIPDMSGKESGADGASTSPRNQNKPFSVPHTKSLESRIK) form a disordered region. Phosphoserine is present on residues S280 and S298. The segment covering 295–305 (ASTSPRNQNKP) has biased composition (polar residues). Residues 367–407 (LLRLAKEEVSRQELRQRVRMADNEVMDAFRKIMAARQKKRT) adopt a coiled-coil conformation. Position 418 is an N6-acetyllysine (K418).

It belongs to the NGG1 family. The PCAF complex is composed of a number of TBP-associated factors (TAFS), such as TAF5, TAF5L, TAF6, TAF6L, TAF9, TAF10 and TAF12, PCAF, and also PCAF-associated factors (PAFs), such as TADA2L/ADA2, TADA3L/ADA3 and SPT3. Interacts directly with TADA2L and PCAF and also with the high-risk HPV oncoprotein E6. Component of the STAGA transcription coactivator-HAT complex, at least composed of SUPT3H, GCN5L2, TAF5L, TAF6L, SUPT7L, TADA3L, TAD1L, TAF10, TAF12, TRRAP and TAF9. Component of the TFTC-HAT complex. Component of the ADA2A-containing complex (ATAC), composed of KAT14, KAT2A, TADA2L, TADA3L, ZZ3, MBIP, WDR5, YEATS2, CCDC101 and DR1.

The protein resides in the nucleus. Its function is as follows. Functions as a component of the PCAF complex. The PCAF complex is capable of efficiently acetylating histones in a nucleosomal context. The PCAF complex could be considered as the human version of the yeast SAGA complex. Also known as a coactivator for p53/TP53-dependent transcriptional activation. Component of the ATAC complex, a complex with histone acetyltransferase activity on histones H3 and H4. This Mus musculus (Mouse) protein is Transcriptional adapter 3 (Tada3).